We begin with the raw amino-acid sequence, 276 residues long: NADPH-dependent 7-cyano-7-deazaguanine reductase (276 aa).

83–85 (IES) serves as a coordination point for substrate. 85–86 (SK) provides a ligand contact to NADPH. C184 serves as the catalytic Thioimide intermediate. Catalysis depends on D191, which acts as the Proton donor. Position 223–224 (223–224 (HE)) interacts with substrate. NADPH is bound at residue 252 to 253 (RG).

It belongs to the GTP cyclohydrolase I family. QueF type 2 subfamily. Homodimer.

It is found in the cytoplasm. The enzyme catalyses 7-aminomethyl-7-carbaguanine + 2 NADP(+) = 7-cyano-7-deazaguanine + 2 NADPH + 3 H(+). It participates in tRNA modification; tRNA-queuosine biosynthesis. Catalyzes the NADPH-dependent reduction of 7-cyano-7-deazaguanine (preQ0) to 7-aminomethyl-7-deazaguanine (preQ1). In Pseudomonas aeruginosa (strain ATCC 15692 / DSM 22644 / CIP 104116 / JCM 14847 / LMG 12228 / 1C / PRS 101 / PAO1), this protein is NADPH-dependent 7-cyano-7-deazaguanine reductase.